Reading from the N-terminus, the 71-residue chain is Large ribosomal subunit protein bL31 (71 aa).

C16, C18, C37, and C40 together coordinate Zn(2+).

It belongs to the bacterial ribosomal protein bL31 family. Type A subfamily. In terms of assembly, part of the 50S ribosomal subunit. Zn(2+) is required as a cofactor.

In terms of biological role, binds the 23S rRNA. The sequence is that of Large ribosomal subunit protein bL31 from Aeromonas salmonicida (strain A449).